Reading from the N-terminus, the 254-residue chain is 3-oxo-5-alpha-steroid 4-dehydrogenase 2 (254 aa).

The next 4 membrane-spanning stretches (helical) occupy residues 8–28 (SPVL…LYVA), 72–92 (PLSL…LHYF), 146–166 (FSLG…SDYI), and 206–226 (LATW…FLGL).

It belongs to the steroid 5-alpha reductase family. In terms of tissue distribution, expressed in high levels in the prostate and many other androgen-sensitive tissues.

The protein resides in the microsome membrane. The protein localises to the endoplasmic reticulum membrane. It catalyses the reaction a 3-oxo-5alpha-steroid + NADP(+) = a 3-oxo-Delta(4)-steroid + NADPH + H(+). The catalysed reaction is 17beta-hydroxy-5alpha-androstan-3-one + NADP(+) = testosterone + NADPH + H(+). It carries out the reaction 5alpha-pregnane-3,20-dione + NADP(+) = progesterone + NADPH + H(+). Its function is as follows. Converts testosterone (T) into 5-alpha-dihydrotestosterone (DHT) and progesterone or corticosterone into their corresponding 5-alpha-3-oxosteroids. It plays a central role in sexual differentiation and androgen physiology. In Homo sapiens (Human), this protein is 3-oxo-5-alpha-steroid 4-dehydrogenase 2 (SRD5A2).